Here is a 562-residue protein sequence, read N- to C-terminus: Urocanate hydratase (562 aa).

NAD(+) is bound by residues 52-53, glutamine 130, 176-178, glutamate 196, arginine 201, 242-243, 263-267, 273-274, and tyrosine 322; these read GG, GMG, NA, QTSAH, and YL. Residue cysteine 410 is part of the active site. Glycine 492 contributes to the NAD(+) binding site.

This sequence belongs to the urocanase family. NAD(+) is required as a cofactor.

It localises to the cytoplasm. The catalysed reaction is 4-imidazolone-5-propanoate = trans-urocanate + H2O. It participates in amino-acid degradation; L-histidine degradation into L-glutamate; N-formimidoyl-L-glutamate from L-histidine: step 2/3. In terms of biological role, catalyzes the conversion of urocanate to 4-imidazolone-5-propionate. In Klebsiella pneumoniae (strain 342), this protein is Urocanate hydratase.